Consider the following 127-residue polypeptide: Large ribosomal subunit protein bL12 (127 aa).

It belongs to the bacterial ribosomal protein bL12 family. Homodimer. Part of the ribosomal stalk of the 50S ribosomal subunit. Forms a multimeric L10(L12)X complex, where L10 forms an elongated spine to which 2 to 4 L12 dimers bind in a sequential fashion. Binds GTP-bound translation factors.

Its function is as follows. Forms part of the ribosomal stalk which helps the ribosome interact with GTP-bound translation factors. Is thus essential for accurate translation. This Rhizobium etli (strain CIAT 652) protein is Large ribosomal subunit protein bL12.